Consider the following 430-residue polypeptide: Serine--tRNA ligase (430 aa).

An L-serine-binding site is contributed by 235–237 (TSE). 266–268 (RSE) contacts ATP. Glutamate 289 is a binding site for L-serine. ATP is bound at residue 353–356 (EISS). Serine 388 is an L-serine binding site.

This sequence belongs to the class-II aminoacyl-tRNA synthetase family. Type-1 seryl-tRNA synthetase subfamily. In terms of assembly, homodimer. The tRNA molecule binds across the dimer.

The protein localises to the cytoplasm. It catalyses the reaction tRNA(Ser) + L-serine + ATP = L-seryl-tRNA(Ser) + AMP + diphosphate + H(+). The catalysed reaction is tRNA(Sec) + L-serine + ATP = L-seryl-tRNA(Sec) + AMP + diphosphate + H(+). It participates in aminoacyl-tRNA biosynthesis; selenocysteinyl-tRNA(Sec) biosynthesis; L-seryl-tRNA(Sec) from L-serine and tRNA(Sec): step 1/1. Its function is as follows. Catalyzes the attachment of serine to tRNA(Ser). Is also able to aminoacylate tRNA(Sec) with serine, to form the misacylated tRNA L-seryl-tRNA(Sec), which will be further converted into selenocysteinyl-tRNA(Sec). The chain is Serine--tRNA ligase from Azoarcus sp. (strain BH72).